Consider the following 479-residue polypeptide: tRNA modification GTPase MnmE (479 aa).

(6S)-5-formyl-5,6,7,8-tetrahydrofolate is bound by residues R30, E91, and K130. Residues 226 to 402 (GFRIVLTGLP…VLKDLVKEFA (177 aa)) enclose the TrmE-type G domain. N236 contributes to the K(+) binding site. GTP-binding positions include 236 to 241 (NVGKSS), 255 to 261 (TDIPGTT), and 280 to 283 (DTAG). S240 serves as a coordination point for Mg(2+). Positions 255, 257, and 260 each coordinate K(+). Residue T261 coordinates Mg(2+). K479 contacts (6S)-5-formyl-5,6,7,8-tetrahydrofolate.

This sequence belongs to the TRAFAC class TrmE-Era-EngA-EngB-Septin-like GTPase superfamily. TrmE GTPase family. In terms of assembly, homodimer. Heterotetramer of two MnmE and two MnmG subunits. It depends on K(+) as a cofactor.

It is found in the cytoplasm. In terms of biological role, exhibits a very high intrinsic GTPase hydrolysis rate. Involved in the addition of a carboxymethylaminomethyl (cmnm) group at the wobble position (U34) of certain tRNAs, forming tRNA-cmnm(5)s(2)U34. The protein is tRNA modification GTPase MnmE of Bdellovibrio bacteriovorus (strain ATCC 15356 / DSM 50701 / NCIMB 9529 / HD100).